An 839-amino-acid polypeptide reads, in one-letter code: Phenylalanine--tRNA ligase beta subunit (839 aa).

The tRNA-binding domain occupies 42–166; that stretch reads GELTGPIVIG…PPSVEGHQLV (125 aa). The 76-residue stretch at 421–496 folds into the B5 domain; the sequence is PEMPRQTINA…RKIGFDRIKA (76 aa). Residues Asp-474, Asp-480, Glu-483, and Glu-484 each coordinate Mg(2+). One can recognise an FDX-ACB domain in the interval 745 to 838; the sequence is SSFPVAKEDV…AEETCGAQLR (94 aa).

The protein belongs to the phenylalanyl-tRNA synthetase beta subunit family. Type 1 subfamily. As to quaternary structure, tetramer of two alpha and two beta subunits. Mg(2+) is required as a cofactor.

It localises to the cytoplasm. The catalysed reaction is tRNA(Phe) + L-phenylalanine + ATP = L-phenylalanyl-tRNA(Phe) + AMP + diphosphate + H(+). This chain is Phenylalanine--tRNA ligase beta subunit, found in Cutibacterium acnes (strain DSM 16379 / KPA171202) (Propionibacterium acnes).